The following is a 167-amino-acid chain: Phosphopantetheine adenylyltransferase (167 aa).

Thr-13 is a substrate binding site. Residues 13–14 (TF) and His-21 contribute to the ATP site. Substrate contacts are provided by Lys-45, Leu-78, and Arg-92. Residues 93–95 (GLR), Glu-103, and 128–134 (TQFISSS) contribute to the ATP site.

This sequence belongs to the bacterial CoaD family. In terms of assembly, homohexamer. Mg(2+) serves as cofactor.

It is found in the cytoplasm. It catalyses the reaction (R)-4'-phosphopantetheine + ATP + H(+) = 3'-dephospho-CoA + diphosphate. Its pathway is cofactor biosynthesis; coenzyme A biosynthesis; CoA from (R)-pantothenate: step 4/5. Its function is as follows. Reversibly transfers an adenylyl group from ATP to 4'-phosphopantetheine, yielding dephospho-CoA (dPCoA) and pyrophosphate. The chain is Phosphopantetheine adenylyltransferase from Wolbachia sp. subsp. Brugia malayi (strain TRS).